We begin with the raw amino-acid sequence, 152 residues long: Large ribosomal subunit protein uL15 (152 aa).

The segment at 1 to 66 (MRSNPMTLRL…GFEGGQTPMQ (66 aa)) is disordered. The segment covering 28–38 (RGIGSGLGKTA) has biased composition (gly residues). Positions 39 to 52 (GRGHKGSFARKGGG) are enriched in basic residues.

This sequence belongs to the universal ribosomal protein uL15 family. In terms of assembly, part of the 50S ribosomal subunit.

Its function is as follows. Binds to the 23S rRNA. The chain is Large ribosomal subunit protein uL15 from Xanthomonas oryzae pv. oryzae (strain KACC10331 / KXO85).